We begin with the raw amino-acid sequence, 156 residues long: MASGMRRTGRELAIKIIYSFDGTGSVEALLATFWSNFRFRDDVLGEPLEDSSQAVAEPVREFAEDLVRGVAENLEKIDGLIGEFSTNWSLERMARVDLAILRMATYELLGHLDVPVSVIINEAVEIGKRYGTKETPSFVNGILDRISRTCRPVVAS.

The protein belongs to the NusB family.

Involved in transcription antitermination. Required for transcription of ribosomal RNA (rRNA) genes. Binds specifically to the boxA antiterminator sequence of the ribosomal RNA (rrn) operons. This Syntrophotalea carbinolica (strain DSM 2380 / NBRC 103641 / GraBd1) (Pelobacter carbinolicus) protein is Transcription antitermination protein NusB.